The following is a 323-amino-acid chain: Cell division protein ZipA (323 aa).

Topologically, residues 1 to 5 (MQELR) are periplasmic. A helical transmembrane segment spans residues 6–26 (FVLIVVGALAIAALLFHGLWT). Residues 27-323 (SKKEGKAKFG…QIVEFNAANA (297 aa)) lie on the Cytoplasmic side of the membrane. The tract at residues 35–92 (FGNKPLGKLDVDQEDKDTPGQERDFAPDPEDDFEIIRKDRKEPDFGMENSFDNKFSSD) is disordered. Composition is skewed to basic and acidic residues over residues 41–60 (GKLD…RDFA) and 68–78 (EIIRKDRKEPD).

Belongs to the ZipA family. As to quaternary structure, interacts with FtsZ via their C-terminal domains.

It is found in the cell inner membrane. Its function is as follows. Essential cell division protein that stabilizes the FtsZ protofilaments by cross-linking them and that serves as a cytoplasmic membrane anchor for the Z ring. Also required for the recruitment to the septal ring of downstream cell division proteins. The polypeptide is Cell division protein ZipA (Vibrio campbellii (strain ATCC BAA-1116)).